Reading from the N-terminus, the 363-residue chain is Peptide chain release factor 1 (363 aa).

An N5-methylglutamine modification is found at Gln237.

Belongs to the prokaryotic/mitochondrial release factor family. Methylated by PrmC. Methylation increases the termination efficiency of RF1.

It is found in the cytoplasm. Peptide chain release factor 1 directs the termination of translation in response to the peptide chain termination codons UAG and UAA. The sequence is that of Peptide chain release factor 1 from Hydrogenovibrio crunogenus (strain DSM 25203 / XCL-2) (Thiomicrospira crunogena).